The sequence spans 95 residues: Large ribosomal subunit protein bL27 (95 aa).

A propeptide spanning residues 1-10 (MRFILNLQFF) is cleaved from the precursor.

It belongs to the bacterial ribosomal protein bL27 family. The N-terminus is cleaved by ribosomal processing cysteine protease Prp.

The sequence is that of Large ribosomal subunit protein bL27 from Mesoplasma florum (strain ATCC 33453 / NBRC 100688 / NCTC 11704 / L1) (Acholeplasma florum).